The chain runs to 729 residues: Neurochondrin (729 aa).

Ser-2 is subject to N-acetylserine. Residue Ser-2 is modified to Phosphoserine. 2 S-palmitoyl cysteine lipidation sites follow: Cys-3 and Cys-4. Arg-75 carries the asymmetric dimethylarginine modification. Residue Ser-448 is modified to Phosphoserine.

Belongs to the neurochondrin family. As to quaternary structure, interacts with MCHR1. Interacts with SEMA4C. Interacts with DIAPH1 (via FH3 domain). Interacts with GRM5. In terms of processing, palmitoylated. Palmitoylation by ZDHHC1, ZDHHC3 and ZDHHC11 regulates the association of NCDN with endosome membranes. May also be palmitoylated by ZDHHC7.

It localises to the cytoplasm. Its subcellular location is the cytosol. It is found in the endosome membrane. The protein resides in the cell projection. The protein localises to the dendrite. It localises to the postsynapse. Probably involved in signal transduction, in the nervous system, via increasing cell surface localization of GRM5 and positively regulating its signaling. Required for the spatial learning process. Acts as a negative regulator of Ca(2+)-calmodulin-dependent protein kinase 2 (CaMK2) phosphorylation. May play a role in modulating melanin-concentrating hormone-mediated functions via its interaction with MCHR1 that interferes with G protein-coupled signal transduction. May be involved in bone metabolism. May also be involved in neurite outgrowth. This Bos taurus (Bovine) protein is Neurochondrin (NCDN).